A 56-amino-acid polypeptide reads, in one-letter code: UPF0434 protein CbuK_1382 (56 aa).

The protein belongs to the UPF0434 family.

The protein is UPF0434 protein CbuK_1382 of Coxiella burnetii (strain CbuK_Q154) (Coxiella burnetii (strain Q154)).